The primary structure comprises 762 residues: 5-methyltetrahydropteroyltriglutamate--homocysteine methyltransferase (762 aa).

5-methyltetrahydropteroyltri-L-glutamate-binding positions include 17 to 20 and Lys-111; that span reads REWK. L-homocysteine contacts are provided by residues 435 to 437 and Glu-488; that span reads IGS. Residues 435–437 and Glu-488 each bind L-methionine; that span reads IGS. Residues 519 to 520 and Trp-565 contribute to the 5-methyltetrahydropteroyltri-L-glutamate site; that span reads RC. Residue Asp-603 participates in L-homocysteine binding. Residue Asp-603 participates in L-methionine binding. Glu-609 contacts 5-methyltetrahydropteroyltri-L-glutamate. Residues His-645, Cys-647, and Glu-669 each contribute to the Zn(2+) site. Catalysis depends on His-698, which acts as the Proton donor. Cys-730 contributes to the Zn(2+) binding site.

This sequence belongs to the vitamin-B12 independent methionine synthase family. Requires Zn(2+) as cofactor.

It catalyses the reaction 5-methyltetrahydropteroyltri-L-glutamate + L-homocysteine = tetrahydropteroyltri-L-glutamate + L-methionine. It functions in the pathway amino-acid biosynthesis; L-methionine biosynthesis via de novo pathway; L-methionine from L-homocysteine (MetE route): step 1/1. In terms of biological role, catalyzes the transfer of a methyl group from 5-methyltetrahydrofolate to homocysteine resulting in methionine formation. The polypeptide is 5-methyltetrahydropteroyltriglutamate--homocysteine methyltransferase (Bacillus cereus (strain ZK / E33L)).